Consider the following 344-residue polypeptide: Methionine import ATP-binding protein MetN (344 aa).

The 240-residue stretch at I2–I241 folds into the ABC transporter domain. G38–S45 contacts ATP.

It belongs to the ABC transporter superfamily. Methionine importer (TC 3.A.1.24) family. In terms of assembly, the complex is composed of two ATP-binding proteins (MetN), two transmembrane proteins (MetI) and a solute-binding protein (MetQ).

Its subcellular location is the cell inner membrane. It carries out the reaction L-methionine(out) + ATP + H2O = L-methionine(in) + ADP + phosphate + H(+). It catalyses the reaction D-methionine(out) + ATP + H2O = D-methionine(in) + ADP + phosphate + H(+). Its function is as follows. Part of the ABC transporter complex MetNIQ involved in methionine import. Responsible for energy coupling to the transport system. The sequence is that of Methionine import ATP-binding protein MetN from Cupriavidus necator (strain ATCC 17699 / DSM 428 / KCTC 22496 / NCIMB 10442 / H16 / Stanier 337) (Ralstonia eutropha).